We begin with the raw amino-acid sequence, 571 residues long: Cationic amino acid transporter 8 (571 aa).

The N-linked (GlcNAc...) asparagine glycan is linked to Asn35. 6 helical membrane-spanning segments follow: residues 39–59, 94–114, 117–137, 148–168, 177–197, and 217–237; these read FWLLVIIVIYTATSACIYFDW, SLYPITLAIHFTMSVFCGFLY, IGPKFTAIIGQMCNIMSWVFL, FLSFVFLGLGADTAFIPILTI, TFILTVVGAAASLSYAVPATL, and IFLILVPCLLVATFLLPLMPF. Residues Asn298, Asn325, and Asn346 are each glycosylated (N-linked (GlcNAc...) asparagine). The chain crosses the membrane as a helical span at residues 365–385; that stretch reads LFFKVLLSYPSICIIVYFILF. N-linked (GlcNAc...) asparagine glycosylation occurs at Asn386. Helical transmembrane passes span 405-425, 433-453, 461-481, 488-508, and 528-548; these read SIINIINILMPISCIPCIIFG, SAIIIILMNAFSALMHLTALI, VSAFLYMCVTSIYTSQIYCFI, VVFGKLLGFASLCGGLFSLLC, and VVLLLVIAFILMFLPLTVLYF.

This sequence belongs to the SLC43A transporter (TC 2.A.1.44) family.

Its subcellular location is the membrane. The catalysed reaction is L-arginine(in) = L-arginine(out). In terms of biological role, sodium-independent cationic amino acid transporter. Transports L-arginine, L-lysine, L-histidine and L-ornithine. This chain is Cationic amino acid transporter 8, found in Plasmodium vivax (strain Salvador I).